We begin with the raw amino-acid sequence, 350 residues long: Protein RecA (350 aa).

68–75 (GPESSGKT) is an ATP binding site.

Belongs to the RecA family.

The protein resides in the cytoplasm. Functionally, can catalyze the hydrolysis of ATP in the presence of single-stranded DNA, the ATP-dependent uptake of single-stranded DNA by duplex DNA, and the ATP-dependent hybridization of homologous single-stranded DNAs. It interacts with LexA causing its activation and leading to its autocatalytic cleavage. This chain is Protein RecA, found in Symbiobacterium thermophilum (strain DSM 24528 / JCM 14929 / IAM 14863 / T).